A 117-amino-acid polypeptide reads, in one-letter code: Immunoglobulin kappa variable 9-129 (117 aa).

Positions 1–22 (MDMRAPAQVFGFLLLWFPGARC) are cleaved as a signal peptide. Residues 23–45 (DIQMTQSPSSLSASLGERVSLTC) form a framework-1 region. The cysteines at positions 45 and 110 are disulfide-linked. The segment at 46–56 (RASQDIHGYLN) is complementarity-determining-1. The interval 57-71 (LFQQKPGETIKHLIY) is framework-2. The interval 72–78 (ETSNLDS) is complementarity-determining-2. The tract at residues 79-110 (GVPKRFSGSRSGSDYSLIIGSLESEDFADYYC) is framework-3. The complementarity-determining-3 stretch occupies residues 111-117 (LQYASSP).

This Mus musculus (Mouse) protein is Immunoglobulin kappa variable 9-129.